A 308-amino-acid chain; its full sequence is MPKYTLYYFNSRGRAEICRMLFAAANIPYNDVRIDYSEWDIYRSKMPGSCLPVLEINDSIQIPQTMAIARYLARQFGFYGKHHLDMARVDFICDSFYDIFNDYMRMYHDQKGRVMFELMSQMREWYAARNENSGYEECYMQPSMAPSAQMSQEVDNSDTLADCSEMRSQDSMVEPPSQKLSPELESQSSLCSERPQCGPPDPMMGSDFERLSFNEGRMLEMRRRYDETCRRVLPFLEGTLKQRYGGDRYFMGEYMTMCDLMCYCALENPLLDNAYLLHPYPKLRGLRDRVSRNQRINSYFTLRNYTDF.

The GST N-terminal domain maps to 2–80 (PKYTLYYFNS…YLARQFGFYG (79 aa)). Positions 165 to 205 (EMRSQDSMVEPPSQKLSPELESQSSLCSERPQCGPPDPMMG) are disordered. Polar residues predominate over residues 178 to 191 (QKLSPELESQSSLC). The region spanning 185–308 (ESQSSLCSER…YFTLRNYTDF (124 aa)) is the GST C-terminal domain.

It belongs to the GST superfamily. As to expression, lens.

S-crystallins are structural components of squids and octopi eye lens. Contains relatively little if any GST activity. This is S-crystallin SL18 from Nototodarus sloanii (Wellington flying squid).